The chain runs to 335 residues: MPPLFCVLKAFFIGLVVSLILVKPLIWLKKQGLQDRIHKDHCEKLEKLHKNKAHIPTAGGIIFVLSVVLSILLLLPCNLWSTWFLVGATLLWGALGWRDDQIKNKRKVGHGLSAKRKFFIQNCLAIGTVLPIMIAYGESFLCMHLPFVGIVSLPHCWLGYLFSFSIAVLAIVGTSNSVNLTDGLDGLAAGSMVIACLGMLIVTFAYGAPWAFISGVLLATLAGSCLGFLYYNRSPARIFMGDTGSLFLGGMLGICAVLLRAEFMLLFMGGIFVLESLSVILQVGSCKLRKKRVFLCSPLHHHYEYKGYPEKVVVRNFWIIEFLCVAIGIFAVFWG.

The next 9 membrane-spanning stretches (helical) occupy residues 2 to 22, 55 to 75, 77 to 97, 118 to 137, 153 to 173, 193 to 213, 238 to 258, 263 to 283, and 313 to 333; these read PPLF…LILV, IPTA…LLLL, CNLW…ALGW, FFIQ…IAYG, LPHC…AIVG, VIAC…WAFI, IFMG…CAVL, FMLL…ILQV, and VVRN…FAVF.

Belongs to the glycosyltransferase 4 family. MraY subfamily. Mg(2+) serves as cofactor.

The protein resides in the cell inner membrane. The catalysed reaction is UDP-N-acetyl-alpha-D-muramoyl-L-alanyl-gamma-D-glutamyl-meso-2,6-diaminopimeloyl-D-alanyl-D-alanine + di-trans,octa-cis-undecaprenyl phosphate = di-trans,octa-cis-undecaprenyl diphospho-N-acetyl-alpha-D-muramoyl-L-alanyl-D-glutamyl-meso-2,6-diaminopimeloyl-D-alanyl-D-alanine + UMP. The protein operates within cell wall biogenesis; peptidoglycan biosynthesis. Functionally, catalyzes the initial step of the lipid cycle reactions in the biosynthesis of the cell wall peptidoglycan: transfers peptidoglycan precursor phospho-MurNAc-pentapeptide from UDP-MurNAc-pentapeptide onto the lipid carrier undecaprenyl phosphate, yielding undecaprenyl-pyrophosphoryl-MurNAc-pentapeptide, known as lipid I. This is Phospho-N-acetylmuramoyl-pentapeptide-transferase from Chlamydia muridarum (strain MoPn / Nigg).